Here is a 157-residue protein sequence, read N- to C-terminus: MEKIPMTPDGLARLEAELKSLKSVDRPAVIRAISEARDHGDLSENAEYHAARERQSFIEGRIKELEDVTSRAEVIDISKLSGDTVRFGATVSVLDEDSEEQTTYQIVGAHEADLKAGRISVASPIGKALIGKKVGDSIEVKAPGGSKFYEVTMVRFG.

Residues Ala46–Asp67 are a coiled coil.

This sequence belongs to the GreA/GreB family.

Necessary for efficient RNA polymerase transcription elongation past template-encoded arresting sites. The arresting sites in DNA have the property of trapping a certain fraction of elongating RNA polymerases that pass through, resulting in locked ternary complexes. Cleavage of the nascent transcript by cleavage factors such as GreA or GreB allows the resumption of elongation from the new 3'terminus. GreA releases sequences of 2 to 3 nucleotides. This is Transcription elongation factor GreA from Rhodospirillum rubrum (strain ATCC 11170 / ATH 1.1.1 / DSM 467 / LMG 4362 / NCIMB 8255 / S1).